The primary structure comprises 83 residues: Small ribosomal subunit protein uS17 (83 aa).

This sequence belongs to the universal ribosomal protein uS17 family. In terms of assembly, part of the 30S ribosomal subunit.

Functionally, one of the primary rRNA binding proteins, it binds specifically to the 5'-end of 16S ribosomal RNA. The sequence is that of Small ribosomal subunit protein uS17 from Zymomonas mobilis subsp. mobilis (strain ATCC 31821 / ZM4 / CP4).